Reading from the N-terminus, the 320-residue chain is Putative thiosulfate sulfurtransferase (320 aa).

The first 37 residues, 1–37 (MSVRSLRWPRQKAFLAVISLVVAVLLAVPGWLTPATA), serve as a signal peptide directing secretion. Rhodanese domains lie at 56–166 (NNKQ…PVTK) and 194–315 (LTGK…PVET). The Cysteine persulfide intermediate role is filled by C274.

It localises to the periplasm. The enzyme catalyses thiosulfate + hydrogen cyanide = thiocyanate + sulfite + 2 H(+). Functionally, may be a sulfotransferase involved in the transport of sulfate. Displays very low rhodanese activity. The protein is Putative thiosulfate sulfurtransferase (rhdA) of Synechococcus elongatus (strain ATCC 33912 / PCC 7942 / FACHB-805) (Anacystis nidulans R2).